Reading from the N-terminus, the 525-residue chain is GMP synthase [glutamine-hydrolyzing] (525 aa).

The Glutamine amidotransferase type-1 domain maps to 8–207; that stretch reads KILILDFGSQ…ALDICQCEAN (200 aa). Cys85 functions as the Nucleophile in the catalytic mechanism. Active-site residues include His181 and Glu183. The region spanning 208–400 is the GMPS ATP-PPase domain; the sequence is WKPSSIIEDA…LGLPYNMLYR (193 aa). 235 to 241 is an ATP binding site; that stretch reads SGGVDSS.

As to quaternary structure, homodimer.

The enzyme catalyses XMP + L-glutamine + ATP + H2O = GMP + L-glutamate + AMP + diphosphate + 2 H(+). The protein operates within purine metabolism; GMP biosynthesis; GMP from XMP (L-Gln route): step 1/1. In terms of biological role, catalyzes the synthesis of GMP from XMP. In Shewanella loihica (strain ATCC BAA-1088 / PV-4), this protein is GMP synthase [glutamine-hydrolyzing].